Reading from the N-terminus, the 145-residue chain is Deoxyuridine 5'-triphosphate nucleotidohydrolase (145 aa).

Residues 62-64, Asn75, and 79-81 contribute to the substrate site; these read RSG and TVD.

This sequence belongs to the dUTPase family. Mg(2+) serves as cofactor.

The catalysed reaction is dUTP + H2O = dUMP + diphosphate + H(+). The protein operates within pyrimidine metabolism; dUMP biosynthesis; dUMP from dCTP (dUTP route): step 2/2. In terms of biological role, this enzyme is involved in nucleotide metabolism: it produces dUMP, the immediate precursor of thymidine nucleotides and it decreases the intracellular concentration of dUTP so that uracil cannot be incorporated into DNA. The sequence is that of Deoxyuridine 5'-triphosphate nucleotidohydrolase from Gloeothece citriformis (strain PCC 7424) (Cyanothece sp. (strain PCC 7424)).